The sequence spans 349 residues: Glycerol-3-phosphate dehydrogenase [NAD(+)], cytoplasmic (349 aa).

10 to 15 (GSGNWG) is a binding site for NAD(+). Position 120 (Lys-120) interacts with substrate. An NAD(+)-binding site is contributed by Ala-153. Ser-154 bears the Phosphoserine mark. Lys-204 serves as the catalytic Proton acceptor. An NAD(+)-binding site is contributed by Arg-269. Position 269-270 (269-270 (RN)) interacts with substrate. Lys-289 is subject to N6-succinyllysine. 2 residues coordinate NAD(+): Lys-296 and Gln-298. Tyr-326 is modified (phosphotyrosine).

The protein belongs to the NAD-dependent glycerol-3-phosphate dehydrogenase family. Homodimer.

Its subcellular location is the cytoplasm. It carries out the reaction sn-glycerol 3-phosphate + NAD(+) = dihydroxyacetone phosphate + NADH + H(+). Has glycerol-3-phosphate dehydrogenase activity. This is Glycerol-3-phosphate dehydrogenase [NAD(+)], cytoplasmic from Rattus norvegicus (Rat).